A 294-amino-acid polypeptide reads, in one-letter code: 4-hydroxy-tetrahydrodipicolinate synthase (294 aa).

Thr-47 contacts pyruvate. Tyr-136 (proton donor/acceptor) is an active-site residue. The active-site Schiff-base intermediate with substrate is Lys-164. Residue Val-206 coordinates pyruvate.

Belongs to the DapA family. Homotetramer; dimer of dimers.

It localises to the cytoplasm. It carries out the reaction L-aspartate 4-semialdehyde + pyruvate = (2S,4S)-4-hydroxy-2,3,4,5-tetrahydrodipicolinate + H2O + H(+). The protein operates within amino-acid biosynthesis; L-lysine biosynthesis via DAP pathway; (S)-tetrahydrodipicolinate from L-aspartate: step 3/4. Its function is as follows. Catalyzes the condensation of (S)-aspartate-beta-semialdehyde [(S)-ASA] and pyruvate to 4-hydroxy-tetrahydrodipicolinate (HTPA). The polypeptide is 4-hydroxy-tetrahydrodipicolinate synthase (Nostoc sp. (strain PCC 7120 / SAG 25.82 / UTEX 2576)).